The sequence spans 87 residues: U14-lycotoxin-Ls1a (87 aa).

Positions 1–20 (MNSKVFAALLLLALSTCVLS) are cleaved as a signal peptide. The 46-residue stretch at 21–66 (EKYCPTPRNTSCKKMNIRNNCCRDSDCTSNAFCCAEPCGNFCHKAS) folds into the WAP domain. Intrachain disulfides connect cysteine 24-cysteine 54, cysteine 32-cysteine 58, cysteine 41-cysteine 53, cysteine 42-cysteine 80, and cysteine 47-cysteine 62.

The protein belongs to the venom protein 11 family. 01 (wap-1) subfamily. In terms of processing, contains 5 disulfide bonds. Expressed by the venom gland.

It is found in the secreted. Its function is as follows. Has antibacterial activity. This chain is U14-lycotoxin-Ls1a, found in Lycosa singoriensis (Wolf spider).